The primary structure comprises 397 residues: Major outer membrane porin, serovar L3 (397 aa).

The signal sequence occupies residues 1–22 (MKKLLKSVLVFAALSSASSLQA).

The protein belongs to the chlamydial porin (CP) (TC 1.B.2) family. Part of a disulfide cross-linked outer membrane complex (COMC) composed of the major outer membrane porin (MOMP), the small cysteine-rich protein (OmcA) and the large cysteine-rich periplasmic protein (OmcB).

It localises to the cell outer membrane. Functionally, in elementary bodies (EBs, the infectious stage, which is able to survive outside the host cell) provides the structural integrity of the outer envelope through disulfide cross-links with the small cysteine-rich protein and the large cysteine-rich periplasmic protein. It has been described in publications as the Sarkosyl-insoluble COMC (Chlamydia outer membrane complex), and serves as the functional equivalent of peptidoglycan. Permits diffusion of specific solutes through the outer membrane. The protein is Major outer membrane porin, serovar L3 (ompA) of Chlamydia trachomatis.